The following is a 117-amino-acid chain: Large ribosomal subunit protein bL20c (117 aa).

Belongs to the bacterial ribosomal protein bL20 family.

It is found in the plastid. The protein resides in the chloroplast. Its function is as follows. Binds directly to 23S ribosomal RNA and is necessary for the in vitro assembly process of the 50S ribosomal subunit. It is not involved in the protein synthesizing functions of that subunit. The chain is Large ribosomal subunit protein bL20c from Morus indica (Mulberry).